The sequence spans 527 residues: Transcription factor RBF1 (527 aa).

Disordered stretches follow at residues M1 to S36, A258 to E281, H328 to A365, Q395 to D433, and T470 to L527. The DNA-binding element occupies H160 to H300. Residues N263–E281 show a composition bias toward basic and acidic residues. Low complexity-rich tracts occupy residues Q332–A365 and Q395–T428.

This sequence belongs to the RBF1 family.

Its subcellular location is the nucleus. It is found in the chromosome. The protein localises to the telomere. Functionally, transcriptional activator that binds to the RPG box and to telomeres. Involved in the regulation of the transition between yeast and filamentous forms and plays a role in virulence. Induces expression of HWP1, a major hyphal cell protein and virulence factor. The sequence is that of Transcription factor RBF1 (RBF1) from Candida albicans (Yeast).